Here is a 148-residue protein sequence, read N- to C-terminus: MRYQKLEIQEANWQWKYLLKKHREGENITKHTEQSLIELKVQFLTTLQHSPAEIEQWIKAEMTAEQRKRMRQSIRAKRKRFFNAEKLTTKKKSIDLDYASWLRLSKYSKTHAMTLSETINHLIDERENQHLYSEQMAKMKASLKDLLK.

This sequence belongs to the MatP family. As to quaternary structure, homodimer.

Its subcellular location is the cytoplasm. In terms of biological role, required for spatial organization of the terminus region of the chromosome (Ter macrodomain) during the cell cycle. Prevents early segregation of duplicated Ter macrodomains during cell division. Binds specifically to matS, which is a 13 bp signature motif repeated within the Ter macrodomain. This chain is Macrodomain Ter protein, found in Haemophilus ducreyi (strain 35000HP / ATCC 700724).